We begin with the raw amino-acid sequence, 627 residues long: UvrABC system protein C (627 aa).

Positions 26–105 constitute a GIY-YIG domain; the sequence is PEPGVYFMRD…IKQHQPYFNV (80 aa). The UVR domain occupies 215–250; it reads QELIDILSEQMEKAAEALNFEVAARIRDQIAGLKSL.

Belongs to the UvrC family. As to quaternary structure, interacts with UvrB in an incision complex.

The protein resides in the cytoplasm. In terms of biological role, the UvrABC repair system catalyzes the recognition and processing of DNA lesions. UvrC both incises the 5' and 3' sides of the lesion. The N-terminal half is responsible for the 3' incision and the C-terminal half is responsible for the 5' incision. The polypeptide is UvrABC system protein C (Nostoc sp. (strain PCC 7120 / SAG 25.82 / UTEX 2576)).